The sequence spans 210 residues: uncharacterized protein (210 aa).

Residues Ser-18, Ser-39, Ser-41, Ser-57, and Ser-60 each carry the phosphoserine modification. A compositionally biased stretch (polar residues) spans Leu-33–Ala-46. The interval Leu-33 to Gly-58 is disordered. 2 disordered regions span residues Tyr-100 to Ser-139 and Asp-177 to Thr-210. A compositionally biased stretch (polar residues) spans His-102–Met-116. Over residues Asn-130 to Ser-139 the composition is skewed to basic and acidic residues. Phosphoserine is present on residues Ser-178, Ser-189, and Ser-192. The span at His-191–Thr-210 shows a compositional bias: polar residues.

This is an uncharacterized protein from Saccharomyces cerevisiae (strain ATCC 204508 / S288c) (Baker's yeast).